Consider the following 1310-residue polypeptide: MEIQQTHRKINRPIISLALVGVLMGTELGANTPNDPIHSESRAFFTTVIIPAIVGGIATGAAVGTVSGLLSWGLKQAEQANKAPDKPDKVWRIQAGRGFDNFPHKQYDLYKSLLSSKIDGGWDWGNAARHYWVKDGQWNKLEVDMQNAVGTYNLSGLINFTGGDLDVNMQKATLRLGQFNGNSFTSFKDGANRTTRVNFDAKNILIDNFVEINNRVGSGAGRKASSTVLTLKSSEKITSRENAEISLYDGATLNLVSSSNQSVDLYGKVWMGRLQYVGAYLAPSYSTIDTSKVQGEMNFRHLAVGDQNAAQAGIIANKKTNIGTLDLWQSAGLSIITPPEGGYESKTKDNPQNNPKNDAQKTEIQPTQVIDGPFAGGKDTVVNIFHLNTKADGTLRAGGFKASLSTNAAHLHIGEGGVNLSNQASGRTLLVENLTGNITVEGTLRVNNQVGGAAIAGSSANFEFKAGEDTNNATATFNNDIHLGKAVNLRVDAHTANFNGNIYLGKSTNLRVNGHTAHFKNIDATKSDNGLNTSTLDFSGVTDKVNINKLTTAATNVNIKNFDIKELVVTTRVQSFGQYTIFGENIGDKSRIGVVSLQTGYSPAYSGGVTFKGGKKLVIDEIYHAPWNYFDARNVTDVEINKRILFGAPGNIAGKTGLMFNNLTLNSNASMDYGKDLDLTIQGHFTNNQGTMNLFVQDGRVATLNAGHQASMIFNNLVDSTTGFYKPLIKINNAQNLTKNKEHVLVKARNIDYNLVGVQGASYDNISASNTNLQEQFKERLALYNNNNRMDTCVVRKDNLNDIKACGMAIGNQSMVNNPENYKYLEGKAWKNTGINKTANNTTIAVNLGNNSTPTNSTTDTTNLPTNTTNNARFASYALIKNAPFAHSATPNLVAINQHDFGTIESVFELANRSSDIDTLYANSGAQGRDLLQTLLIDSHDAGYARTMIDATSANEITQQLNAATTTLNNIASLEHKTSGLQTLSLSNAMILNSRLVNLSRKHTNHIDSFAKRLQALKDQRFASLESAAEVLYQFAPKYEKPTNVWANAIGGTSLNNGSNASLYGTSAGVDAYLNGEVEAIVGGFGSYGYSSFSNQANSLNSGANNTNFGVYSRIFANQHEFDFEAQGALGSDQSSLNFKSALLQDLNQSYHYLAYSATTRASYGYDFAFFRNALVLKPSVGVSYNHLGSTNFKSNSNQVALSNGSSSQHLFNANANVEARYYYGDTSYFYMNAGVLQEFARFGSNNAVSLNTFKVNATRNPLNTHARVMMGGELQLAKEVFLNLGVVYLHNLISNASHFASNLGMRYSF.

Positions 1-30 are cleaved as a signal peptide; it reads MEIQQTHRKINRPIISLALVGVLMGTELGA. The interval 339–364 is disordered; sequence PEGGYESKTKDNPQNNPKNDAQKTEI. Positions 350 to 364 are enriched in polar residues; sequence NPQNNPKNDAQKTEI. The Autotransporter domain maps to 1038–1310; sequence KYEKPTNVWA…ASNLGMRYSF (273 aa).

Its subcellular location is the periplasm. It localises to the secreted. The protein resides in the cell surface. It is found in the cell outer membrane. Its function is as follows. Induces vacuolation of eukaryotic cells. Causes ulceration and gastric lesions. The sequence is that of Vacuolating cytotoxin autotransporter (vacA) from Helicobacter pylori (Campylobacter pylori).